A 29-amino-acid polypeptide reads, in one-letter code: Cytochrome b6-f complex subunit 8 (29 aa).

The chain crosses the membrane as a helical span at residues 3–23 (ILALGWVSVLALFTWSIAMVV).

This sequence belongs to the PetN family. As to quaternary structure, the 4 large subunits of the cytochrome b6-f complex are cytochrome b6, subunit IV (17 kDa polypeptide, PetD), cytochrome f and the Rieske protein, while the 4 small subunits are PetG, PetL, PetM and PetN. The complex functions as a dimer.

It is found in the cellular thylakoid membrane. Its function is as follows. Component of the cytochrome b6-f complex, which mediates electron transfer between photosystem II (PSII) and photosystem I (PSI), cyclic electron flow around PSI, and state transitions. This Gloeothece citriformis (strain PCC 7424) (Cyanothece sp. (strain PCC 7424)) protein is Cytochrome b6-f complex subunit 8.